A 364-amino-acid chain; its full sequence is Protein-glutamate methylesterase/protein-glutamine glutaminase (364 aa).

Residues Arg7–Glu124 form the Response regulatory domain. Asp58 is subject to 4-aspartylphosphate. The CheB-type methylesterase domain occupies Glu167–Ser364. Active-site residues include Ser181, His208, and Asp308.

It belongs to the CheB family. Phosphorylated by CheA. Phosphorylation of the N-terminal regulatory domain activates the methylesterase activity.

The protein localises to the cytoplasm. It catalyses the reaction [protein]-L-glutamate 5-O-methyl ester + H2O = L-glutamyl-[protein] + methanol + H(+). The enzyme catalyses L-glutaminyl-[protein] + H2O = L-glutamyl-[protein] + NH4(+). Involved in chemotaxis. Part of a chemotaxis signal transduction system that modulates chemotaxis in response to various stimuli. Catalyzes the demethylation of specific methylglutamate residues introduced into the chemoreceptors (methyl-accepting chemotaxis proteins or MCP) by CheR. Also mediates the irreversible deamidation of specific glutamine residues to glutamic acid. The chain is Protein-glutamate methylesterase/protein-glutamine glutaminase from Methanosarcina barkeri (strain Fusaro / DSM 804).